The primary structure comprises 196 residues: Late protein I196L (196 aa).

2 repeat units span residues 28–48 and 49–68. One copy of the 3; approximate repeat lies at 69-87; the sequence is ITTAISNNITDKDDYTHFS.

It belongs to the asfivirus I196L family.

In Ornithodoros (relapsing fever ticks), this protein is Late protein I196L.